The primary structure comprises 119 residues: Protein TusC (119 aa).

It belongs to the DsrF/TusC family. In terms of assembly, heterohexamer, formed by a dimer of trimers. The hexameric TusBCD complex contains 2 copies each of TusB, TusC and TusD. The TusBCD complex interacts with TusE.

It localises to the cytoplasm. In terms of biological role, part of a sulfur-relay system required for 2-thiolation of 5-methylaminomethyl-2-thiouridine (mnm(5)s(2)U) at tRNA wobble positions. The polypeptide is Protein TusC (Photorhabdus laumondii subsp. laumondii (strain DSM 15139 / CIP 105565 / TT01) (Photorhabdus luminescens subsp. laumondii)).